The chain runs to 702 residues: Polyribonucleotide nucleotidyltransferase (702 aa).

Mg(2+) is bound by residues Asp-493 and Asp-499. The 60-residue stretch at 560–619 (PRLLTMRIDPERIRDVIGKGGATIRGLTEETGTNIDISDEGVVTIASADKAAAEEAKKRI) folds into the KH domain. The region spanning 629–697 (GKVYDGKVAK…RQGRIRLSMK (69 aa)) is the S1 motif domain.

Belongs to the polyribonucleotide nucleotidyltransferase family. As to quaternary structure, component of the RNA degradosome, which is a multiprotein complex involved in RNA processing and mRNA degradation. Mg(2+) serves as cofactor.

It localises to the cytoplasm. It catalyses the reaction RNA(n+1) + phosphate = RNA(n) + a ribonucleoside 5'-diphosphate. Functionally, involved in mRNA degradation. Catalyzes the phosphorolysis of single-stranded polyribonucleotides processively in the 3'- to 5'-direction. This Halorhodospira halophila (strain DSM 244 / SL1) (Ectothiorhodospira halophila (strain DSM 244 / SL1)) protein is Polyribonucleotide nucleotidyltransferase.